The primary structure comprises 252 residues: Carboxymethylenebutenolidase (252 aa).

The segment at 1-28 is disordered; it reads MCHNKSSAPPTPAHISIQQNRTPGTDPV. Catalysis depends on residues cysteine 126, aspartate 183, and histidine 214.

This sequence belongs to the dienelactone hydrolase family.

The catalysed reaction is 2-(5-oxo-2,5-dihydrofuran-2-ylidene)acetate + H2O = 4-oxohex-2-enedioate + H(+). The protein operates within aromatic compound metabolism; 3-chlorocatechol degradation. Its function is as follows. Ring cleavage of cyclic ester dienelactone to produce maleylacetate. The sequence is that of Carboxymethylenebutenolidase (clcD) from Rhodococcus opacus (Nocardia opaca).